Reading from the N-terminus, the 179-residue chain is NAD(P)H-quinone oxidoreductase subunit I, chloroplastic (179 aa).

2 4Fe-4S ferredoxin-type domains span residues 55-84 and 95-124; these read GRIHFEFDKCIACEVCVRVCPIDLPVVDWR and LNYSIDFGICIFCGNCVEYCPTNCLSMTEE. The [4Fe-4S] cluster site is built by Cys-64, Cys-67, Cys-70, Cys-74, Cys-104, Cys-107, Cys-110, and Cys-114.

It belongs to the complex I 23 kDa subunit family. In terms of assembly, NDH is composed of at least 16 different subunits, 5 of which are encoded in the nucleus. [4Fe-4S] cluster serves as cofactor.

It localises to the plastid. The protein resides in the chloroplast thylakoid membrane. The catalysed reaction is a plastoquinone + NADH + (n+1) H(+)(in) = a plastoquinol + NAD(+) + n H(+)(out). It carries out the reaction a plastoquinone + NADPH + (n+1) H(+)(in) = a plastoquinol + NADP(+) + n H(+)(out). Its function is as follows. NDH shuttles electrons from NAD(P)H:plastoquinone, via FMN and iron-sulfur (Fe-S) centers, to quinones in the photosynthetic chain and possibly in a chloroplast respiratory chain. The immediate electron acceptor for the enzyme in this species is believed to be plastoquinone. Couples the redox reaction to proton translocation, and thus conserves the redox energy in a proton gradient. The protein is NAD(P)H-quinone oxidoreductase subunit I, chloroplastic of Nuphar advena (Common spatterdock).